A 461-amino-acid polypeptide reads, in one-letter code: tRNA modification GTPase MnmE (461 aa).

Arg-22, Glu-87, and Arg-126 together coordinate (6S)-5-formyl-5,6,7,8-tetrahydrofolate. A TrmE-type G domain is found at 222 to 382 (GITAVIAGKP…LENKLYEILI (161 aa)). Asn-232 is a binding site for K(+). Residues 232 to 237 (NVGKSS), 251 to 257 (TDIPGTT), 276 to 279 (DTAG), and 363 to 365 (SAR) contribute to the GTP site. A Mg(2+)-binding site is contributed by Ser-236. 3 residues coordinate K(+): Thr-251, Ile-253, and Thr-256. Thr-257 lines the Mg(2+) pocket. Lys-461 contacts (6S)-5-formyl-5,6,7,8-tetrahydrofolate.

The protein belongs to the TRAFAC class TrmE-Era-EngA-EngB-Septin-like GTPase superfamily. TrmE GTPase family. Homodimer. Heterotetramer of two MnmE and two MnmG subunits. K(+) serves as cofactor.

Its subcellular location is the cytoplasm. Its function is as follows. Exhibits a very high intrinsic GTPase hydrolysis rate. Involved in the addition of a carboxymethylaminomethyl (cmnm) group at the wobble position (U34) of certain tRNAs, forming tRNA-cmnm(5)s(2)U34. This Carboxydothermus hydrogenoformans (strain ATCC BAA-161 / DSM 6008 / Z-2901) protein is tRNA modification GTPase MnmE.